We begin with the raw amino-acid sequence, 72 residues long: Large ribosomal subunit protein bL31 (72 aa).

Zn(2+) contacts are provided by Cys-16, Cys-18, Cys-38, and Cys-41.

This sequence belongs to the bacterial ribosomal protein bL31 family. Type A subfamily. In terms of assembly, part of the 50S ribosomal subunit. Zn(2+) is required as a cofactor.

Binds the 23S rRNA. This Aromatoleum aromaticum (strain DSM 19018 / LMG 30748 / EbN1) (Azoarcus sp. (strain EbN1)) protein is Large ribosomal subunit protein bL31.